The primary structure comprises 132 residues: MSRQDVQRLLEEYQLIGELLSSLQAQHATVAELLEELTTALDGVRLLKGEGGERLVHIGAGLFVKGVFEAKEVLAPLGAGYHAFLDLNNAERILQERIEEYSKLKTSLEENIEKLAERAAQIRQALERLGIR.

The protein belongs to the prefoldin subunit alpha family. Heterohexamer of two alpha and four beta subunits.

Its subcellular location is the cytoplasm. Molecular chaperone capable of stabilizing a range of proteins. Seems to fulfill an ATP-independent, HSP70-like function in archaeal de novo protein folding. The polypeptide is Prefoldin subunit alpha (pfdA) (Pyrobaculum aerophilum (strain ATCC 51768 / DSM 7523 / JCM 9630 / CIP 104966 / NBRC 100827 / IM2)).